Consider the following 419-residue polypeptide: Transcription termination factor Rho (419 aa).

Residues 48 to 123 form the Rho RNA-BD domain; the sequence is DIFGDGVLEI…LKVNEVNYDK (76 aa). RNA-binding regions lie at residues 61–66, 78–80, and 108–110; these read GFGFLR, DIY, and ERY. Residues 169–174, 181–186, and R212 contribute to the ATP site; these read GRGQRG and KAGKTI. An RNA-binding 2 region spans residues 284-288; the sequence is VLTGG.

Belongs to the Rho family. As to quaternary structure, homohexamer. The homohexamer assembles into an open ring structure.

Its function is as follows. Facilitates transcription termination by a mechanism that involves Rho binding to the nascent RNA, activation of Rho's RNA-dependent ATPase activity, and release of the mRNA from the DNA template. The sequence is that of Transcription termination factor Rho from Buchnera aphidicola subsp. Acyrthosiphon pisum (strain APS) (Acyrthosiphon pisum symbiotic bacterium).